The primary structure comprises 520 residues: Cytochrome b5 reductase 4 (520 aa).

Methionine 1 is modified (N-acetylmethionine). The segment covering 1-16 (MLNVPSQSFPGPSSQQ) has biased composition (low complexity). The disordered stretch occupies residues 1–27 (MLNVPSQSFPGPSSQQRVASGGRSKVP). Residues 54–130 (LIEVTEEELK…LKECLVGRMA (77 aa)) enclose the Cytochrome b5 heme-binding domain. Positions 89 and 112 each coordinate heme. Residues 164-255 (PSSPSYDWFQ…KENTSWKCLG (92 aa)) enclose the CS domain. Residues 272-384 (LFYRKCQLVS…SNPEGNFIIS (113 aa)) form the FAD-binding FR-type domain. Residues 364–379 (DQLQ…NPEG) and 391–423 (DLFL…KVKL) each bind FAD.

The protein belongs to the flavoprotein pyridine nucleotide cytochrome reductase family. FAD serves as cofactor.

Its subcellular location is the endoplasmic reticulum. It carries out the reaction 2 Fe(III)-[cytochrome b5] + NADH = 2 Fe(II)-[cytochrome b5] + NAD(+) + H(+). NADH-cytochrome b5 reductase involved in endoplasmic reticulum stress response pathway. Plays a critical role in protecting pancreatic beta-cells against oxidant stress, possibly by protecting the cell from excess buildup of reactive oxygen species (ROS). In Bos taurus (Bovine), this protein is Cytochrome b5 reductase 4 (CYB5R4).